The following is a 914-amino-acid chain: Eukaryotic initiation factor 4F subunit p130 (914 aa).

Residues 1 to 12 (MTDQRGPPPPHP) are compositionally biased toward pro residues. 4 disordered regions span residues 1–84 (MTDQ…YNNR), 128–205 (PPYT…NEAV), 240–351 (ERKK…VNKS), and 457–535 (IARN…LVPS). Polar residues predominate over residues 26 to 44 (NQYSGANNSQPNNHYNENL). Residues 59-73 (KNGKYGTNKYNNRNN) are compositionally biased toward low complexity. Serine 74 is modified (phosphoserine). The segment covering 145–155 (PKTTKIEITTK) has biased composition (low complexity). Basic and acidic residues predominate over residues 156 to 195 (TGERLNLKKFHEEKKASKGEEKNDGVEQKSKSGTPFEKEA). Phosphothreonine is present on threonine 196. Residues 201-315 (ANEAVKDTLT…TGSVTKSVTF (115 aa)) form an interaction with PAB1 region. Positions 240 to 263 (ERKKNGLISETEKKQETSNHDNTD) are enriched in basic and acidic residues. Composition is skewed to polar residues over residues 298-325 (SVKT…SSSQ) and 339-348 (ISDTTGGKTV). Threonine 301 is modified (phosphothreonine). Residues 496 to 529 (RMGDDRRSNRGYTSRKDREKAAEKAEEQAPKEEI) are compositionally biased toward basic and acidic residues. The residue at position 503 (serine 503) is a Phosphoserine. In terms of domain architecture, MIF4G spans 567–810 (ERKMKSLLNK…IDVKELREIK (244 aa)). The interval 833 to 914 (QLRQKKNSQR…ALMNNDGDSD (82 aa)) is disordered. A compositionally biased stretch (low complexity) spans 841 to 867 (QRSNSRFNNHNQSNSNRYSSNRRNMQN). Positions 868–886 (TQRDSFASTKTGSFRNNQR) are enriched in polar residues. Serine 913 carries the phosphoserine modification.

This sequence belongs to the eukaryotic initiation factor 4G family. Component of the eIF4F complex, which composition varies with external and internal environmental conditions. It is composed of at least eIF4A (TIF1/TIF2), eIF4E (TIF45) and eIF4G (TIF4631 or TIF4632). Interacts with PAT1 in a RNA-dependent manner.

Its subcellular location is the cytoplasm. In terms of biological role, component of the eIF4F complex, which interacts with the mRNA cap structure and serves as an initial point of assembly for the translation apparatus. Stimulates translation by interaction with polyadenylate-binding protein PAB1, bringing the 5'- and 3'-ends of the mRNA in proximity. The formation of this circular mRNP structure appears to be critical for the synergistic effects of the cap and the poly(A) tail in facilitating translation initiation, recycling of ribosomes, and mRNA stability. TIF4632 is probably essential when TIF4631 is missing. In Saccharomyces cerevisiae (strain ATCC 204508 / S288c) (Baker's yeast), this protein is Eukaryotic initiation factor 4F subunit p130.